Consider the following 125-residue polypeptide: Large ribosomal subunit protein bL12 (125 aa).

The protein belongs to the bacterial ribosomal protein bL12 family. As to quaternary structure, homodimer. Part of the ribosomal stalk of the 50S ribosomal subunit. Forms a multimeric L10(L12)X complex, where L10 forms an elongated spine to which 2 to 4 L12 dimers bind in a sequential fashion. Binds GTP-bound translation factors.

Its function is as follows. Forms part of the ribosomal stalk which helps the ribosome interact with GTP-bound translation factors. Is thus essential for accurate translation. In Helicobacter pylori (strain HPAG1), this protein is Large ribosomal subunit protein bL12.